The primary structure comprises 874 residues: MSNHLSGSEIRQRFLDFFAARNHKILPSASLVPEDPTVLLTIAGMLPFKPIFLGQKTPEFPRATTSQKCIRTNDIENVGRTARHHTFFEMLGNFSFGDYFKEQAIAWAWELSTEVFNLPPERLVVSVFKEDEEAFAIWRDKIGIPAHRIQKMGEEDNFWVSGPTGPCGPCSEIYYDFHPELGDKTIDLEDDSRFIEFYNLVFMQYNRDADGNLTPLANKNIDTGMGLERMAQILQKVANNYETDLIFPIVAEAARLAAIDYQKADEKTKVSLKVIGDHVRSVVHMIADGISASNTDRGYVLRRLIRRVVRHGRLIGIEGQFITKVAEVAIALSESVYGNVRERETVIKAELEREEARFLETLERGEKLLESILEKEKSQISGVDAFTLYDTYGFPLELTQEIAEEQGLSVDTAGFEQEMKKQQQRSKAAHETIDLTVQGSLDKLAEHIHPTEFLGYTDLQATATVTAVLVAGKTVESAAAGTEVQVVLDRTPFYAESGGQIGDKGYLTGDNLLIRIEDVQKESGIFIHFGRIERGIVTTGDTINAQIDRSCRRRAQANHTATHLLQSALKKLVDGGISQAGSLVSFDRLRFDFNCPRPLTSSELQQVEEQINTWIAEAHDTQIAVMGLEEAKQKGAIAMFGEKYGSEVRVIDIPSVSMELCGGTHVKNTAEIGLFKIISETGIAAGIRRIEAVAGPAVLAYLNERDQVVRALCDRFKVKPLEIPDRITALQSELKGTQKQLEAVKQELALNKSDALLSQAESIGEFKLLVASLGDIDANALMAAAERLQQKLGEGAVILASTPAADKVSLVAAFSPRVIKDKGLQAGKFIGAIAKICAGGGGGRPNLAQAGGRDASKLSEALAKAKSQLTSSLQ.

Zn(2+)-binding residues include H559, H563, C661, and H665.

It belongs to the class-II aminoacyl-tRNA synthetase family. Zn(2+) is required as a cofactor.

The protein localises to the cytoplasm. The enzyme catalyses tRNA(Ala) + L-alanine + ATP = L-alanyl-tRNA(Ala) + AMP + diphosphate. Catalyzes the attachment of alanine to tRNA(Ala) in a two-step reaction: alanine is first activated by ATP to form Ala-AMP and then transferred to the acceptor end of tRNA(Ala). Also edits incorrectly charged Ser-tRNA(Ala) and Gly-tRNA(Ala) via its editing domain. The sequence is that of Alanine--tRNA ligase from Microcystis aeruginosa (strain NIES-843 / IAM M-2473).